The chain runs to 114 residues: uncharacterized protein (114 aa).

The HIT domain maps to Ile-6–Gly-114. Residues His-98–His-102 carry the Histidine triad motif motif.

This is an uncharacterized protein from Synechocystis sp. (strain ATCC 27184 / PCC 6803 / Kazusa).